A 38-amino-acid chain; its full sequence is Cytochrome b6-f complex subunit 5 (38 aa).

A helical transmembrane segment spans residues 5–25 (LLSGIVLGLIPITLAGLFVTA).

This sequence belongs to the PetG family. As to quaternary structure, the 4 large subunits of the cytochrome b6-f complex are cytochrome b6, subunit IV (17 kDa polypeptide, PetD), cytochrome f and the Rieske protein, while the 4 small subunits are PetG, PetL, PetM and PetN. The complex functions as a dimer.

The protein localises to the plastid. It is found in the chloroplast thylakoid membrane. Component of the cytochrome b6-f complex, which mediates electron transfer between photosystem II (PSII) and photosystem I (PSI), cyclic electron flow around PSI, and state transitions. PetG is required for either the stability or assembly of the cytochrome b6-f complex. This is Cytochrome b6-f complex subunit 5 from Adiantum capillus-veneris (Maidenhair fern).